We begin with the raw amino-acid sequence, 596 residues long: Aspartate--tRNA(Asp/Asn) ligase (596 aa).

An L-aspartate-binding site is contributed by E175. Residues 199–202 (QQYK) are aspartate. Residues R221 and H454 each coordinate L-aspartate. 221–223 (RDE) serves as a coordination point for ATP. E488 is a binding site for ATP. Position 495 (R495) interacts with L-aspartate. Residue 540-543 (GVDR) participates in ATP binding.

Belongs to the class-II aminoacyl-tRNA synthetase family. Type 1 subfamily. In terms of assembly, homodimer.

Its subcellular location is the cytoplasm. It catalyses the reaction tRNA(Asx) + L-aspartate + ATP = L-aspartyl-tRNA(Asx) + AMP + diphosphate. Its function is as follows. Aspartyl-tRNA synthetase with relaxed tRNA specificity since it is able to aspartylate not only its cognate tRNA(Asp) but also tRNA(Asn). Reaction proceeds in two steps: L-aspartate is first activated by ATP to form Asp-AMP and then transferred to the acceptor end of tRNA(Asp/Asn). This chain is Aspartate--tRNA(Asp/Asn) ligase, found in Bartonella bacilliformis (strain ATCC 35685 / KC583 / Herrer 020/F12,63).